The sequence spans 1578 residues: BRD4-interacting chromatin-remodeling complex-associated protein (1578 aa).

Disordered regions lie at residues 80–101 (DILG…DQPC), 631–673 (PAVT…PSLA), and 725–951 (IVSA…PPPR). Gly residues predominate over residues 86-96 (AAGGGGGGGGA). 2 stretches are compositionally biased toward low complexity: residues 631 to 662 (PAVT…TQPQ) and 764 to 782 (IPAA…PSLP). Pro residues-rich tracts occupy residues 793–816 (MPSP…PPSQ), 824–841 (PSEP…PPTL), and 865–888 (PGPP…PASH). The span at 889 to 906 (LPPASTPSAVASSSEPSA) shows a compositional bias: low complexity. A Phosphoserine modification is found at serine 929. The residue at position 931 (threonine 931) is a Phosphothreonine. The segment covering 942–951 (PTAPPPPPPR) has biased composition (pro residues). N6-acetyllysine is present on lysine 1067. A disordered region spans residues 1206–1316 (EKPDEYVSSS…NRPPIKTYEA (111 aa)). 2 stretches are compositionally biased toward low complexity: residues 1233 to 1247 (SHGQ…GTSA) and 1275 to 1294 (ASSS…AASS). A Glycyl lysine isopeptide (Lys-Gly) (interchain with G-Cter in SUMO2) cross-link involves residue lysine 1327. Disordered regions lie at residues 1342 to 1435 (DPVH…PTKV) and 1457 to 1578 (VLKG…TLNR). The span at 1346 to 1370 (QPLPAPTPAKGAEPPPHPAPPPLPP) shows a compositional bias: pro residues. The residue at position 1427 (serine 1427) is a Phosphoserine. Positions 1502–1532 (ASFSSDSPQDDTLTEHLQSAIDSILNLQQAP) are enriched in polar residues. Residues 1538–1553 (GPYPHTGPTPGTPTSP) show a composition bias toward pro residues.

Component of the multiprotein chromatin-remodeling complexes SWI/SNF: SWI/SNF-A (BAF), SWI/SNF-B (PBAF) and related complexes. The canonical complex contains a catalytic subunit (either SMARCA4/BRG1/BAF190A or SMARCA2/BRM/BAF190B) and at least SMARCE1, ACTL6A/BAF53, SMARCC1/BAF155, SMARCC2/BAF170, and SMARCB1/SNF5/BAF47. Other subunits specific to each of the complexes may also be present permitting several possible combinations developmentally and tissue specific. Component of the SWI/SNF (GBAF) subcomplex, which includes at least BICRA or BICRAL (mutually exclusive), BRD9, SS18, the core BAF subunits, SMARCA2/BRM, SMARCA4/BRG1/BAF190A, ACTL6A/BAF53, SMARCC1/BAF155, and SMARCD1/BAF60A. Interacts with BRD4; the interaction bridges BRD4 to the GBAF complex.

The protein localises to the nucleus. Component of SWI/SNF chromatin remodeling subcomplex GBAF that carries out key enzymatic activities, changing chromatin structure by altering DNA-histone contacts within a nucleosome in an ATP-dependent manner. May play a role in BRD4-mediated gene transcription. The polypeptide is BRD4-interacting chromatin-remodeling complex-associated protein (Mus musculus (Mouse)).